The sequence spans 361 residues: Chorismate synthase (361 aa).

The disordered stretch occupies residues 37-59; it reads TEADLQHDLDRRRPGTSRYTTQR. The span at 40–49 shows a compositional bias: basic and acidic residues; that stretch reads DLQHDLDRRR. 2 residues coordinate NADP(+): Arg-48 and Arg-54. Residues 125–127, 238–239, Gly-278, 293–297, and Arg-319 contribute to the FMN site; these read RSS, NA, and KPTSS.

The protein belongs to the chorismate synthase family. In terms of assembly, homotetramer. FMNH2 serves as cofactor.

The catalysed reaction is 5-O-(1-carboxyvinyl)-3-phosphoshikimate = chorismate + phosphate. It participates in metabolic intermediate biosynthesis; chorismate biosynthesis; chorismate from D-erythrose 4-phosphate and phosphoenolpyruvate: step 7/7. Functionally, catalyzes the anti-1,4-elimination of the C-3 phosphate and the C-6 proR hydrogen from 5-enolpyruvylshikimate-3-phosphate (EPSP) to yield chorismate, which is the branch point compound that serves as the starting substrate for the three terminal pathways of aromatic amino acid biosynthesis. This reaction introduces a second double bond into the aromatic ring system. The protein is Chorismate synthase of Serratia proteamaculans (strain 568).